A 127-amino-acid polypeptide reads, in one-letter code: MEVGLSPSACLRRIKLMEQAGVIRGYTALVDPTQSESTIAVIINITLERQTEEYLDKFEAAVRKHPEIRECYLMTGGSDYMLRVDVENAGAFERIHKEVLSTLPGVLRIHSSFSIRNVLAGRLKAKR.

An HTH asnC-type domain is found at 1-46; the sequence is MEVGLSPSACLRRIKLMEQAGVIRGYTALVDPTQSESTIAVIINIT.

In terms of biological role, not known, symbiotically active. This is an uncharacterized protein from Sinorhizobium fredii (strain NBRC 101917 / NGR234).